An 89-amino-acid chain; its full sequence is Small ribosomal subunit protein uS15 (89 aa).

It belongs to the universal ribosomal protein uS15 family. In terms of assembly, part of the 30S ribosomal subunit. Forms a bridge to the 50S subunit in the 70S ribosome, contacting the 23S rRNA.

One of the primary rRNA binding proteins, it binds directly to 16S rRNA where it helps nucleate assembly of the platform of the 30S subunit by binding and bridging several RNA helices of the 16S rRNA. In terms of biological role, forms an intersubunit bridge (bridge B4) with the 23S rRNA of the 50S subunit in the ribosome. This is Small ribosomal subunit protein uS15 from Klebsiella pneumoniae subsp. pneumoniae (strain ATCC 700721 / MGH 78578).